Reading from the N-terminus, the 358-residue chain is Protein RecA (358 aa).

ATP is bound at residue 66–73 (GPESSGKT).

It belongs to the RecA family.

The protein localises to the cytoplasm. Its function is as follows. Can catalyze the hydrolysis of ATP in the presence of single-stranded DNA, the ATP-dependent uptake of single-stranded DNA by duplex DNA, and the ATP-dependent hybridization of homologous single-stranded DNAs. It interacts with LexA causing its activation and leading to its autocatalytic cleavage. The sequence is that of Protein RecA from Herpetosiphon aurantiacus (strain ATCC 23779 / DSM 785 / 114-95).